The primary structure comprises 182 residues: Large ribosomal subunit protein eL15 (182 aa).

It belongs to the eukaryotic ribosomal protein eL15 family.

The chain is Large ribosomal subunit protein eL15 (rpl15e) from Methanothermobacter thermautotrophicus (strain ATCC 29096 / DSM 1053 / JCM 10044 / NBRC 100330 / Delta H) (Methanobacterium thermoautotrophicum).